The sequence spans 532 residues: [Pyruvate dehydrogenase [acetyl-transferring]]-phosphatase 2, mitochondrial (532 aa).

The N-terminal 69 residues, 1 to 69, are a transit peptide targeting the mitochondrion; that stretch reads MSSTVSYWIF…FALRKAYRHT (69 aa). A PPM-type phosphatase domain is found at 107 to 518; it reads NSVLRFESNQ…YRDDITVMVV (412 aa). 4 residues coordinate Mn(2+): Asp144, Gly145, Asp415, and Asp511.

It belongs to the PP2C family. Requires Mg(2+) as cofactor.

Its subcellular location is the mitochondrion. The catalysed reaction is O-phospho-L-seryl-[pyruvate dehydrogenase E1 alpha subunit] + H2O = L-seryl-[pyruvate dehydrogenase E1 alpha subunit] + phosphate. Functionally, mitochondrial enzyme that catalyzes the dephosphorylation and concomitant reactivation of the alpha subunit of the E1 component of the pyruvate dehydrogenase complex (PDC), thereby stimulating the conversion of pyruvate into acetyl-CoA. Acts as a crucial regulator of T cell metabolism and function, with a particular focus on T-helper Th17. The protein is [Pyruvate dehydrogenase [acetyl-transferring]]-phosphatase 2, mitochondrial (Pdp2) of Mus musculus (Mouse).